Consider the following 357-residue polypeptide: Glutamine synthetase cytosolic isozyme (357 aa).

Residues 20-100 form the GS beta-grasp domain; it reads VIAEYIWIGG…VICDAYSPNG (81 aa). Positions 107–357 constitute a GS catalytic domain; it reads KRAAAAKIFN…IAETTILWKP (251 aa).

The protein belongs to the glutamine synthetase family. Homooctamer.

It is found in the cytoplasm. The catalysed reaction is L-glutamate + NH4(+) + ATP = L-glutamine + ADP + phosphate + H(+). This is Glutamine synthetase cytosolic isozyme from Pinus sylvestris (Scotch pine).